The sequence spans 257 residues: Diphthine synthase (257 aa).

S-adenosyl-L-methionine is bound by residues isoleucine 11, aspartate 89, isoleucine 92, 117-118 (SV), leucine 169, leucine 210, and histidine 235.

Belongs to the diphthine synthase family. Homodimer.

The enzyme catalyses 2-[(3S)-amino-3-carboxypropyl]-L-histidyl-[translation elongation factor 2] + 3 S-adenosyl-L-methionine = diphthine-[translation elongation factor 2] + 3 S-adenosyl-L-homocysteine + 3 H(+). It participates in protein modification; peptidyl-diphthamide biosynthesis. Functionally, S-adenosyl-L-methionine-dependent methyltransferase that catalyzes the trimethylation of the amino group of the modified target histidine residue in translation elongation factor 2 (EF-2), to form an intermediate called diphthine. The three successive methylation reactions represent the second step of diphthamide biosynthesis. The protein is Diphthine synthase of Saccharolobus islandicus (strain L.S.2.15 / Lassen #1) (Sulfolobus islandicus).